The chain runs to 265 residues: Probable FAD synthase (265 aa).

It belongs to the PAPS reductase family. FAD1 subfamily.

The enzyme catalyses FMN + ATP + H(+) = FAD + diphosphate. The protein operates within cofactor biosynthesis; FAD biosynthesis; FAD from FMN: step 1/1. Adenylates FMN to FAD. The protein is Probable FAD synthase of Schizosaccharomyces pombe (strain 972 / ATCC 24843) (Fission yeast).